A 309-amino-acid polypeptide reads, in one-letter code: Type II methyltransferase M.HindIII (309 aa).

This sequence belongs to the N(4)/N(6)-methyltransferase family.

The catalysed reaction is a 2'-deoxyadenosine in DNA + S-adenosyl-L-methionine = an N(6)-methyl-2'-deoxyadenosine in DNA + S-adenosyl-L-homocysteine + H(+). Its function is as follows. A beta subtype methylase that recognizes the double-stranded sequence 5'-AAGCTT-3', methylates A-1 on both strands, and protects the DNA from cleavage by the HindIII endonuclease. The chain is Type II methyltransferase M.HindIII from Haemophilus influenzae (strain ATCC 51907 / DSM 11121 / KW20 / Rd).